Reading from the N-terminus, the 244-residue chain is Methylthioribulose-1-phosphate dehydratase (244 aa).

Cys-104 is a binding site for substrate. Zn(2+)-binding residues include His-122 and His-124. Catalysis depends on Glu-148, which acts as the Proton donor/acceptor. His-204 contacts Zn(2+).

Belongs to the aldolase class II family. MtnB subfamily. Zn(2+) is required as a cofactor.

It is found in the cytoplasm. It catalyses the reaction 5-(methylsulfanyl)-D-ribulose 1-phosphate = 5-methylsulfanyl-2,3-dioxopentyl phosphate + H2O. It functions in the pathway amino-acid biosynthesis; L-methionine biosynthesis via salvage pathway; L-methionine from S-methyl-5-thio-alpha-D-ribose 1-phosphate: step 2/6. Its function is as follows. Catalyzes the dehydration of methylthioribulose-1-phosphate (MTRu-1-P) into 2,3-diketo-5-methylthiopentyl-1-phosphate (DK-MTP-1-P). The polypeptide is Methylthioribulose-1-phosphate dehydratase (Cryptococcus neoformans var. neoformans serotype D (strain B-3501A) (Filobasidiella neoformans)).